Here is a 78-residue protein sequence, read N- to C-terminus: Cytochrome b-c1 complex subunit 10, mitochondrial (78 aa).

Residues 1 to 26 are Mitochondrial matrix-facing; the sequence is MVSYVKGPAYKALSHFGKLNAPLVRS. The chain crosses the membrane as a helical span at residues 27–46; that stretch reads YIPNLVFWGAAAGGAVATFT. Over 47 to 78 the chain is Mitochondrial intermembrane; sequence EGVPLFQKTFYEKIPFFGQHWIYNPDPEDVPV.

Belongs to the UQCR11/QCR10 family. In terms of assembly, component of the ubiquinol-cytochrome c oxidoreductase (cytochrome b-c1 complex, complex III, CIII), a multisubunit enzyme composed of 10 subunits. The complex is composed of 3 respiratory subunits cytochrome b (COB), cytochrome c1 (CYT1) and Rieske protein (RIP1), 2 core protein subunits COR1 and QCR2, and 5 low-molecular weight protein subunits QCR6, QCR7, QCR8, QCR9 and QCR10. The complex exists as an obligatory dimer and forms supercomplexes (SCs) in the inner mitochondrial membrane with a monomer or a dimer of cytochrome c oxidase (complex IV, CIV), resulting in 2 different assemblies (supercomplexes III(2)IV and III(2)IV(2)).

It is found in the mitochondrion inner membrane. Component of the ubiquinol-cytochrome c oxidoreductase, a multisubunit transmembrane complex that is part of the mitochondrial electron transport chain which drives oxidative phosphorylation. The complex plays an important role in the uptake of multiple carbon sources present in different host niches. The protein is Cytochrome b-c1 complex subunit 10, mitochondrial of Candida albicans (strain SC5314 / ATCC MYA-2876) (Yeast).